Consider the following 447-residue polypeptide: Tubulin beta chain (447 aa).

Residues Q11, E69, S138, G142, T143, G144, N204, and N226 each coordinate GTP. E69 contributes to the Mg(2+) binding site. The segment at 419–447 (VSEYQQYQDATADEEGEYEDEDQEAEDDM) is disordered. Acidic residues predominate over residues 429–447 (TADEEGEYEDEDQEAEDDM).

The protein belongs to the tubulin family. In terms of assembly, dimer of alpha and beta chains. A typical microtubule is a hollow water-filled tube with an outer diameter of 25 nm and an inner diameter of 15 nM. Alpha-beta heterodimers associate head-to-tail to form protofilaments running lengthwise along the microtubule wall with the beta-tubulin subunit facing the microtubule plus end conferring a structural polarity. Microtubules usually have 13 protofilaments but different protofilament numbers can be found in some organisms and specialized cells. It depends on Mg(2+) as a cofactor.

The protein localises to the cytoplasm. Its subcellular location is the cytoskeleton. Tubulin is the major constituent of microtubules, a cylinder consisting of laterally associated linear protofilaments composed of alpha- and beta-tubulin heterodimers. Microtubules grow by the addition of GTP-tubulin dimers to the microtubule end, where a stabilizing cap forms. Below the cap, tubulin dimers are in GDP-bound state, owing to GTPase activity of alpha-tubulin. This Hordeum vulgare (Barley) protein is Tubulin beta chain (TUBB).